The sequence spans 257 residues: Imidazole glycerol phosphate synthase subunit HisF (257 aa).

Residues Asp-11 and Asp-130 contribute to the active site.

The protein belongs to the HisA/HisF family. In terms of assembly, heterodimer of HisH and HisF.

The protein resides in the cytoplasm. The catalysed reaction is 5-[(5-phospho-1-deoxy-D-ribulos-1-ylimino)methylamino]-1-(5-phospho-beta-D-ribosyl)imidazole-4-carboxamide + L-glutamine = D-erythro-1-(imidazol-4-yl)glycerol 3-phosphate + 5-amino-1-(5-phospho-beta-D-ribosyl)imidazole-4-carboxamide + L-glutamate + H(+). It functions in the pathway amino-acid biosynthesis; L-histidine biosynthesis; L-histidine from 5-phospho-alpha-D-ribose 1-diphosphate: step 5/9. Functionally, IGPS catalyzes the conversion of PRFAR and glutamine to IGP, AICAR and glutamate. The HisF subunit catalyzes the cyclization activity that produces IGP and AICAR from PRFAR using the ammonia provided by the HisH subunit. This Shewanella sediminis (strain HAW-EB3) protein is Imidazole glycerol phosphate synthase subunit HisF.